The chain runs to 289 residues: Ribosomal protein L11 methyltransferase (289 aa).

Thr142, Gly163, Asp185, and Asn226 together coordinate S-adenosyl-L-methionine.

It belongs to the methyltransferase superfamily. PrmA family.

The protein localises to the cytoplasm. It catalyses the reaction L-lysyl-[protein] + 3 S-adenosyl-L-methionine = N(6),N(6),N(6)-trimethyl-L-lysyl-[protein] + 3 S-adenosyl-L-homocysteine + 3 H(+). Methylates ribosomal protein L11. The chain is Ribosomal protein L11 methyltransferase from Legionella pneumophila (strain Paris).